Here is a 449-residue protein sequence, read N- to C-terminus: Na(+)/H(+) antiporter NhaA 1 (449 aa).

The next 11 helical transmembrane spans lie at 38–58 (GILL…PWAA), 79–99 (FTIR…VVGM), 117–137 (VLPL…YAAF), 145–165 (AGWA…LTLV), 175–195 (VFLT…IALF), 198–218 (SGLH…LACL), 240–260 (MHHG…FMPA), 311–331 (FVHL…ALAN), 347–367 (PLPL…IFLF), 390–410 (GVAV…GLAF), and 422–442 (LGIL…LRFV).

The protein belongs to the NhaA Na(+)/H(+) (TC 2.A.33) antiporter family.

It is found in the cell inner membrane. The catalysed reaction is Na(+)(in) + 2 H(+)(out) = Na(+)(out) + 2 H(+)(in). Functionally, na(+)/H(+) antiporter that extrudes sodium in exchange for external protons. The chain is Na(+)/H(+) antiporter NhaA 1 from Myxococcus xanthus (strain DK1622).